We begin with the raw amino-acid sequence, 619 residues long: Leucine aminopeptidase 2 (619 aa).

A peptide contacts are provided by residues 141–143 (QCQ) and 273–278 (PYGGME). A Zn(2+)-binding site is contributed by histidine 302. Residue glutamate 303 is the Proton acceptor of the active site. Zn(2+)-binding residues include histidine 306 and glutamate 325. Tyrosine 390 functions as the Proton donor in the catalytic mechanism.

The protein belongs to the peptidase M1 family. Zn(2+) is required as a cofactor.

The protein resides in the cytoplasm. The protein localises to the nucleus. It catalyses the reaction an epoxide + H2O = an ethanediol. In terms of biological role, aminopeptidase that preferentially cleaves di- and tripeptides. Also has low epoxide hydrolase activity (in vitro). Can hydrolyze the epoxide leukotriene LTA(4) but it forms preferentially 5,6-dihydroxy-7,9,11,14-eicosatetraenoic acid rather than the cytokine leukotriene B(4) as the product compared to the homologous mammalian enzyme (in vitro). The sequence is that of Leucine aminopeptidase 2 from Coccidioides immitis (strain RS) (Valley fever fungus).